Here is a 344-residue protein sequence, read N- to C-terminus: Envelope glycoprotein M (344 aa).

At 1 to 12 the chain is on the intravirion side; sequence MASSRVDTINLR. Residues 13-33 form a helical membrane-spanning segment; the sequence is IWLVSIICAALSFINVTVHLI. Residues 34-76 are Virion surface-facing; it reads AINFPNLGFPCAYFEINDLKAVNLSANNEIYQMTHQLYINPVQ. Residues 77 to 97 traverse the membrane as a helical segment; it reads IICYVLIMAILFLLIIIYYIV. At 98 to 125 the chain is on the intravirion side; it reads CCAKVFSSNKTSNVNQTTRDITWMGDTS. A helical membrane pass occupies residues 126-146; the sequence is SCFQFILIMDTFQLFVTALSF. A topological domain (virion surface) is located at residue arginine 147. Residues 148–168 traverse the membrane as a helical segment; the sequence is LVALGAFAYSIFFVCFTTFNV. At 169–203 the chain is on the intravirion side; it reads TLITQFQSADKSFFAFQKIHPNLKGTVQFKTVVIN. The chain crosses the membrane as a helical span at residues 204–224; the sequence is LSELMLGYSTMFLGITTCLGV. Over 225–238 the chain is Virion surface; sequence GNSIYIRSITVAFS. The helical transmembrane segment at 239 to 259 threads the bilayer; it reads SINTFLVMACIYSIVIEAVLV. The Intravirion segment spans residues 260 to 263; sequence RYVK. Residues 264 to 284 traverse the membrane as a helical segment; that stretch reads PLFGYYVGMFCGAVGLSFPIL. The Virion surface segment spans residues 285 to 293; it reads QYETFFESE. Residues 294 to 314 form a helical membrane-spanning segment; sequence WSTGLIINLSVVAIISIGFII. Topologically, residues 315–344 are intravirion; sequence CRLVRYLVKKKRRYKQLLNAESSSLMDENE.

The protein belongs to the herpesviridae glycoprotein M family. In terms of assembly, interacts (via N-terminus) with gN (via N-terminus). The gM-gN heterodimer forms the gCII complex.

It localises to the virion membrane. It is found in the host Golgi apparatus. The protein localises to the host trans-Golgi network. Its subcellular location is the host endosome membrane. The protein resides in the host nucleus inner membrane. Envelope glycoprotein important for virion assembly and egress. Plays a role in the correct incorporation of gH-gL into virion membrane. Directs the glycoprotein N (gN) to the host trans-Golgi network. The protein is Envelope glycoprotein M of Homo sapiens (Human).